Consider the following 241-residue polypeptide: Biosynthetic peptidoglycan transglycosylase (241 aa).

Residues 18–38 (GVIGIIALWMAGILIFAFLPV) form a helical membrane-spanning segment.

Belongs to the glycosyltransferase 51 family.

The protein localises to the cell inner membrane. It catalyses the reaction [GlcNAc-(1-&gt;4)-Mur2Ac(oyl-L-Ala-gamma-D-Glu-L-Lys-D-Ala-D-Ala)](n)-di-trans,octa-cis-undecaprenyl diphosphate + beta-D-GlcNAc-(1-&gt;4)-Mur2Ac(oyl-L-Ala-gamma-D-Glu-L-Lys-D-Ala-D-Ala)-di-trans,octa-cis-undecaprenyl diphosphate = [GlcNAc-(1-&gt;4)-Mur2Ac(oyl-L-Ala-gamma-D-Glu-L-Lys-D-Ala-D-Ala)](n+1)-di-trans,octa-cis-undecaprenyl diphosphate + di-trans,octa-cis-undecaprenyl diphosphate + H(+). The protein operates within cell wall biogenesis; peptidoglycan biosynthesis. Functionally, peptidoglycan polymerase that catalyzes glycan chain elongation from lipid-linked precursors. This is Biosynthetic peptidoglycan transglycosylase from Yersinia pseudotuberculosis serotype O:1b (strain IP 31758).